We begin with the raw amino-acid sequence, 83 residues long: MKQGIHPDYHPVVFMDSATGFKFISGSTKTSKETVKWEDGKEYPLVRVEISSDSHPFYTGKQKFTQADGRVDRFNKKYGLDKK.

This sequence belongs to the bacterial ribosomal protein bL31 family. Type B subfamily. In terms of assembly, part of the 50S ribosomal subunit.

This Lacticaseibacillus casei (strain BL23) (Lactobacillus casei) protein is Large ribosomal subunit protein bL31B.